Here is a 174-residue protein sequence, read N- to C-terminus: MTTPPLAQFSGQQQQQTQAARDVNTASLCRIGQETVQDIVLRTMEIFQLLRNMQLPNGVTYHPNTHQDRLGKLQEHLRTLSVLFRKLRLVYDKCNENCAGLEPIPSEQLIPYVEDDSSKLEDRMANQLRAASEERREVLEVNKKLKQKNQQLKMIMDQLRNLIWEINSMLAVRS.

The stretch at V113–I166 forms a coiled coil.

It belongs to the Mediator complex subunit 30 family. In terms of assembly, component of the Mediator complex.

Its subcellular location is the nucleus. In terms of biological role, component of the Mediator complex, a coactivator involved in the regulated transcription of nearly all RNA polymerase II-dependent genes. Mediator functions as a bridge to convey information from gene-specific regulatory proteins to the basal RNA polymerase II transcription machinery. Mediator is recruited to promoters by direct interactions with regulatory proteins and serves as a scaffold for the assembly of a functional preinitiation complex with RNA polymerase II and the general transcription factors. The sequence is that of Mediator of RNA polymerase II transcription subunit 30 (med30) from Danio rerio (Zebrafish).